We begin with the raw amino-acid sequence, 473 residues long: MKTLYSLRRFYHVETLFNGTLALTGRDQETTGFAWWAGNARLINLSGKLLGAHVAHAGLIVFWAGAMNLFEVAHFVPEKPMYEQGLILLPHLATLGWGVGPGGEVIDTFPYFVSGVLHLISSAVLGFGGIYHALLGPETLEESFPFFGYVWKDRNKMTTILGIHLILLGIGSFLLVFKAFYFGGIYDTWAPGGGDVRKITNFTLSPSILFGYLLKSPFGGEGWIVSVDDLEDIIGGHVWLGSICILGGIWHILTKPFAWARRALVWSGEAYLSYSLGALAVFGFIACCFVWFNNTAYPSEFYGPTGPEASQAQAFTFLVRDQRLGANVGSAQGPTGLGKYLMRSPTGEVIFGGETMRFWDLRAPWLEPLRGPNGLDLSRLKKDIQPWQERRSAEYMTHAPLGSLNSVGGVATEINAVNYVSPRSWLATSHFVLGFFLFVGHLWHAGRARAAAAGFEKGIDRDFEPVLSMTPLN.

Positions 1-14 (MKTLYSLRRFYHVE) are excised as a propeptide. Threonine 15 is modified (N-acetylthreonine). Residue threonine 15 is modified to Phosphothreonine. 5 consecutive transmembrane segments (helical) span residues 69–93 (LFEV…PHLA), 134–155 (LLGP…KDRN), 178–200 (KAFY…RKIT), 255–275 (KPFA…LSYS), and 291–312 (WFNN…ASQA). Glutamate 367 contacts [CaMn4O5] cluster. The chain crosses the membrane as a helical span at residues 447 to 471 (RARAAAAGFEKGIDRDFEPVLSMTP).

This sequence belongs to the PsbB/PsbC family. PsbC subfamily. As to quaternary structure, PSII is composed of 1 copy each of membrane proteins PsbA, PsbB, PsbC, PsbD, PsbE, PsbF, PsbH, PsbI, PsbJ, PsbK, PsbL, PsbM, PsbT, PsbX, PsbY, PsbZ, Psb30/Ycf12, at least 3 peripheral proteins of the oxygen-evolving complex and a large number of cofactors. It forms dimeric complexes. Binds multiple chlorophylls and provides some of the ligands for the Ca-4Mn-5O cluster of the oxygen-evolving complex. It may also provide a ligand for a Cl- that is required for oxygen evolution. PSII binds additional chlorophylls, carotenoids and specific lipids. is required as a cofactor.

Its subcellular location is the plastid. The protein localises to the chloroplast thylakoid membrane. One of the components of the core complex of photosystem II (PSII). It binds chlorophyll and helps catalyze the primary light-induced photochemical processes of PSII. PSII is a light-driven water:plastoquinone oxidoreductase, using light energy to abstract electrons from H(2)O, generating O(2) and a proton gradient subsequently used for ATP formation. This chain is Photosystem II CP43 reaction center protein, found in Pisum sativum (Garden pea).